The following is a 372-amino-acid chain: Cell division protein FtsZ 1 (372 aa).

GTP-binding positions include 51-55 (GAGCN), 138-140 (GTG), Glu-169, Arg-173, and Asp-216. The interval 352–372 (EETPAPSEEETTPVKIDIPEL) is disordered.

It belongs to the FtsZ family. As to quaternary structure, homodimer. Polymerizes to form a dynamic ring structure in a strictly GTP-dependent manner. Interacts directly with several other division proteins.

Its subcellular location is the cytoplasm. Functionally, essential cell division protein that forms a contractile ring structure (Z ring) at the future cell division site. The regulation of the ring assembly controls the timing and the location of cell division. One of the functions of the FtsZ ring is to recruit other cell division proteins to the septum to produce a new cell wall between the dividing cells. Binds GTP and shows GTPase activity. The polypeptide is Cell division protein FtsZ 1 (Pyrococcus horikoshii (strain ATCC 700860 / DSM 12428 / JCM 9974 / NBRC 100139 / OT-3)).